Reading from the N-terminus, the 766-residue chain is UPF0313 protein PP_4872 (766 aa).

The Radical SAM core domain maps to 371 to 649 (AYEMIRFSVN…KAFLRYHDPK (279 aa)). C385, C389, and C392 together coordinate [4Fe-4S] cluster. A disordered region spans residues 670-766 (GKHQLIPLHQ…KKPRQPVIPR (97 aa)). Residues 723–735 (KPWDKREKAKAEA) show a composition bias toward basic and acidic residues.

This sequence belongs to the UPF0313 family. [4Fe-4S] cluster is required as a cofactor.

In Pseudomonas putida (strain ATCC 47054 / DSM 6125 / CFBP 8728 / NCIMB 11950 / KT2440), this protein is UPF0313 protein PP_4872.